We begin with the raw amino-acid sequence, 527 residues long: Peptide chain release factor 3 (527 aa).

Positions 11–278 (AKRRTFAIIS…GFVEWAPPPL (268 aa)) constitute a tr-type G domain. GTP contacts are provided by residues 20–27 (SHPDAGKT), 87–91 (DTPGH), and 141–144 (NKMD).

The protein belongs to the TRAFAC class translation factor GTPase superfamily. Classic translation factor GTPase family. PrfC subfamily.

It localises to the cytoplasm. In terms of biological role, increases the formation of ribosomal termination complexes and stimulates activities of RF-1 and RF-2. It binds guanine nucleotides and has strong preference for UGA stop codons. It may interact directly with the ribosome. The stimulation of RF-1 and RF-2 is significantly reduced by GTP and GDP, but not by GMP. This Saccharophagus degradans (strain 2-40 / ATCC 43961 / DSM 17024) protein is Peptide chain release factor 3.